The sequence spans 1318 residues: Tetratricopeptide repeat protein 41 (1318 aa).

TPR repeat units follow at residues 401–434, 653–686, 819–852, 860–893, 993–1029, and 1047–1084; these read PRLE…KPCI, WIQE…PVRE, GRII…LLQS, LRAQ…LLRF, MEFL…KEKA, and SDTL…RAAH. The segment at 1295–1318 is disordered; that stretch reads KPGFPRRSQIESKLLKTSDDPNKE. Basic and acidic residues predominate over residues 1302 to 1318; that stretch reads SQIESKLLKTSDDPNKE.

Highly expressed in lung and myeloid leukemia cell line (at protein level). Isoform 4: expressed in heart (at protein level).

Its subcellular location is the cytoplasm. This is Tetratricopeptide repeat protein 41 from Mus musculus (Mouse).